The chain runs to 270 residues: Protein ABHD14A (270 aa).

Residues 9 to 29 traverse the membrane as a helical; Signal-anchor for type II membrane protein segment; sequence LVVLGLVLLATVLLYLLLPSM. N-linked (GlcNAc...) asparagine glycosylation occurs at Asn-61. Catalysis depends on charge relay system residues Ser-170 and Asp-221. N-linked (GlcNAc...) asparagine glycosylation is present at Asn-237. The Charge relay system role is filled by His-248.

The protein belongs to the AB hydrolase superfamily. ABHD14 family.

Its subcellular location is the cytoplasm. It localises to the membrane. Its function is as follows. Possible role in granule neuron development. The protein is Protein ABHD14A of Danio rerio (Zebrafish).